A 472-amino-acid chain; its full sequence is Argininosuccinate lyase (472 aa).

The protein belongs to the lyase 1 family. Argininosuccinate lyase subfamily.

The protein localises to the cytoplasm. The catalysed reaction is 2-(N(omega)-L-arginino)succinate = fumarate + L-arginine. It participates in amino-acid biosynthesis; L-arginine biosynthesis; L-arginine from L-ornithine and carbamoyl phosphate: step 3/3. This is Argininosuccinate lyase from Polynucleobacter asymbioticus (strain DSM 18221 / CIP 109841 / QLW-P1DMWA-1) (Polynucleobacter necessarius subsp. asymbioticus).